Reading from the N-terminus, the 62-residue chain is Large ribosomal subunit protein bL28 (62 aa).

A disordered region spans residues 1–23; that stretch reads MGKQCYVTGRKASTGNRRSHALN.

This sequence belongs to the bacterial ribosomal protein bL28 family.

This is Large ribosomal subunit protein bL28 from Staphylococcus carnosus (strain TM300).